Consider the following 333-residue polypeptide: Eukaryotic translation initiation factor 2 subunit 2 (333 aa).

Disordered regions lie at residues 1 to 119 and 139 to 164; these read MSGD…DLDI and ILEK…NQTG. The residue at position 2 (serine 2) is an N-acetylserine. Residues serine 2 and serine 13 each carry the phosphoserine modification. The segment covering 13 to 22 has biased composition (basic residues); sequence SKKKKKKKKP. Threonine 31 and threonine 36 each carry phosphothreonine. The segment covering 40–51 has biased composition (basic and acidic residues); that stretch reads ETKEVEPEPTED. Serine 67 is subject to Phosphoserine. The span at 96 to 105 shows a compositional bias: basic and acidic residues; it reads EGVKDLKIES. Lysine 102 participates in a covalent cross-link: Glycyl lysine isopeptide (Lys-Gly) (interchain with G-Cter in SUMO2). Serine 105 bears the Phosphoserine mark. Acidic residues-rich tracts occupy residues 106–118 and 139–149; these read DVQE…DDLD and ILEKDEALEDE. A Phosphothreonine modification is found at threonine 111. A phosphoserine mark is found at serine 158 and serine 218. An N6-acetyllysine mark is found at lysine 265 and lysine 293. A C4-type zinc finger spans residues 281 to 305; that stretch reads CHTCRSPDTILQKDTRLYFLQCETC.

This sequence belongs to the eIF-2-beta/eIF-5 family. Eukaryotic translation initiation factor 2 eIF2 is a heterotrimeric complex composed of an alpha (EIF2S1), a beta (EIF2S2) and a gamma (EIF2S3) chain. eIF2 is member of the 43S pre-initiation complex (43S PIC). eIF2 forms a complex with at least CELF1/CUGBP1, CALR, CALR3, EIF2S1, EIF2S2, HSP90B1 and HSPA5. Interacts with BZW2/5MP1. Interacts with EIF5.

The protein resides in the cytoplasm. The protein localises to the cytosol. Functionally, component of the eIF2 complex that functions in the early steps of protein synthesis by forming a ternary complex with GTP and initiator tRNA. This complex binds to a 40S ribosomal subunit, followed by mRNA binding to form the 43S pre-initiation complex (43S PIC). Junction of the 60S ribosomal subunit to form the 80S initiation complex is preceded by hydrolysis of the GTP bound to eIF2 and release of an eIF2-GDP binary complex. In order for eIF2 to recycle and catalyze another round of initiation, the GDP bound to eIF2 must exchange with GTP by way of a reaction catalyzed by eIF2B. The sequence is that of Eukaryotic translation initiation factor 2 subunit 2 (EIF2S2) from Pongo abelii (Sumatran orangutan).